The sequence spans 406 residues: Tryptophan synthase beta chain (406 aa).

Residue lysine 99 is modified to N6-(pyridoxal phosphate)lysine.

The protein belongs to the TrpB family. Tetramer of two alpha and two beta chains. The cofactor is pyridoxal 5'-phosphate.

The catalysed reaction is (1S,2R)-1-C-(indol-3-yl)glycerol 3-phosphate + L-serine = D-glyceraldehyde 3-phosphate + L-tryptophan + H2O. It participates in amino-acid biosynthesis; L-tryptophan biosynthesis; L-tryptophan from chorismate: step 5/5. Its function is as follows. The beta subunit is responsible for the synthesis of L-tryptophan from indole and L-serine. This Agrobacterium fabrum (strain C58 / ATCC 33970) (Agrobacterium tumefaciens (strain C58)) protein is Tryptophan synthase beta chain (trpB).